We begin with the raw amino-acid sequence, 338 residues long: Tetraacyldisaccharide 4'-kinase (338 aa).

Position 67–74 (Ile-67–Thr-74) interacts with ATP.

It belongs to the LpxK family.

It catalyses the reaction a lipid A disaccharide + ATP = a lipid IVA + ADP + H(+). It participates in glycolipid biosynthesis; lipid IV(A) biosynthesis; lipid IV(A) from (3R)-3-hydroxytetradecanoyl-[acyl-carrier-protein] and UDP-N-acetyl-alpha-D-glucosamine: step 6/6. In terms of biological role, transfers the gamma-phosphate of ATP to the 4'-position of a tetraacyldisaccharide 1-phosphate intermediate (termed DS-1-P) to form tetraacyldisaccharide 1,4'-bis-phosphate (lipid IVA). This Acidovorax ebreus (strain TPSY) (Diaphorobacter sp. (strain TPSY)) protein is Tetraacyldisaccharide 4'-kinase.